A 280-amino-acid chain; its full sequence is Pupal cuticle protein 36a (280 aa).

Residues 1-15 (MKLFVLAAVLGVCLA) form the signal peptide. In terms of domain architecture, Chitin-binding type R&amp;R spans 135-198 (AEGFAYDFET…SQGAHLPTPP (64 aa)). The disordered stretch occupies residues 258 to 280 (GAGRAGGTATSASEAPTTTIRLM).

The chain is Pupal cuticle protein 36a (PCP36a) from Manduca sexta (Tobacco hawkmoth).